A 568-amino-acid polypeptide reads, in one-letter code: Protein yellow (568 aa).

Positions 1–28 (MHAQDKGGILPALSLLLIAVAMVSPSQA) are cleaved as a signal peptide. N151 and N222 each carry an N-linked (GlcNAc...) asparagine glycan.

This sequence belongs to the major royal jelly protein family.

Its subcellular location is the secreted. Functionally, controls the pigmentation pattern of the adult cuticle and larval mouth parts. This Drosophila subobscura (Fruit fly) protein is Protein yellow (y).